Consider the following 532-residue polypeptide: Phosphoenolpyruvate carboxykinase (ATP) (532 aa).

Residues Arg60, Tyr194, and Lys200 each contribute to the substrate site. Residues Lys200, His219, and 237–245 (GLSGTGKTT) each bind ATP. The Mn(2+) site is built by Lys200 and His219. Asp258 is a binding site for Mn(2+). The ATP site is built by Glu286, Arg324, and Thr449. Residue Arg324 coordinates substrate.

It belongs to the phosphoenolpyruvate carboxykinase (ATP) family. Mn(2+) serves as cofactor.

The protein localises to the cytoplasm. The catalysed reaction is oxaloacetate + ATP = phosphoenolpyruvate + ADP + CO2. Its pathway is carbohydrate biosynthesis; gluconeogenesis. Involved in the gluconeogenesis. Catalyzes the conversion of oxaloacetate (OAA) to phosphoenolpyruvate (PEP) through direct phosphoryl transfer between the nucleoside triphosphate and OAA. This chain is Phosphoenolpyruvate carboxykinase (ATP), found in Roseobacter denitrificans (strain ATCC 33942 / OCh 114) (Erythrobacter sp. (strain OCh 114)).